The sequence spans 226 residues: MTSRDSASSEITPAVLLRAYACGIFPMAESADDPTLFWVEPELRGVIPLGGFRVASRLARTVRSDGFRVTVNTAFKATIAGCAAPQAGREDTWINKRIRDLYSGLFELGHCHSVEAWQGDDLVGGLYGVSLGRAFFGESMFHTARDASKVALVHLVARLIHGGFELLDTQYVTEHLKNFGAVEIPRRRYTALLDKALAGEPGDFLKLSPGEAIPGARALEIIASRQ.

It belongs to the L/F-transferase family.

The protein localises to the cytoplasm. It carries out the reaction N-terminal L-lysyl-[protein] + L-leucyl-tRNA(Leu) = N-terminal L-leucyl-L-lysyl-[protein] + tRNA(Leu) + H(+). The catalysed reaction is N-terminal L-arginyl-[protein] + L-leucyl-tRNA(Leu) = N-terminal L-leucyl-L-arginyl-[protein] + tRNA(Leu) + H(+). It catalyses the reaction L-phenylalanyl-tRNA(Phe) + an N-terminal L-alpha-aminoacyl-[protein] = an N-terminal L-phenylalanyl-L-alpha-aminoacyl-[protein] + tRNA(Phe). Its function is as follows. Functions in the N-end rule pathway of protein degradation where it conjugates Leu, Phe and, less efficiently, Met from aminoacyl-tRNAs to the N-termini of proteins containing an N-terminal arginine or lysine. The protein is Leucyl/phenylalanyl-tRNA--protein transferase of Bradyrhizobium diazoefficiens (strain JCM 10833 / BCRC 13528 / IAM 13628 / NBRC 14792 / USDA 110).